Reading from the N-terminus, the 296-residue chain is Enoyl-CoA hydratase ACTT3 (296 aa).

A Peroxisomal targeting signal type 1 motif is present at residues 294–296 (PKL).

It belongs to the enoyl-CoA hydratase/isomerase family.

It is found in the peroxisome. It carries out the reaction a (3S)-3-hydroxyacyl-CoA = a (2E)-enoyl-CoA + H2O. It catalyses the reaction a 4-saturated-(3S)-3-hydroxyacyl-CoA = a (3E)-enoyl-CoA + H2O. The protein operates within mycotoxin biosynthesis. Functionally, enoyl-CoA hydratase; part of the gene clusters that mediate the biosynthesis of the host-selective toxins (HSTs) ACT-toxins responsible for brown spot of tangerine disease by the tangerine pathotype which affects tangerines and mandarins. ACT-toxins consist of three moieties, 9,10-epoxy-8-hydroxy-9-methyl-decatrienoic acid (EDA), valine and a polyketide. ACT-toxin I is toxic to both citrus and pear; toxin II the 5''-deoxy derivative of ACT-toxin I, is highly toxic to pear and slightly toxic to citrus. On cellular level, ACT-toxins affect plasma membrane of susceptible cells and cause a sudden increase in loss of K(+) after a few minutes of toxin treatment. The acyl-CoA ligase ACTT1, the hydrolase ACTT2, the enoyl-CoA hydratases ACTT3 and ACTT6, and the acyl-CoA synthetase ACTT5 are all involved in the biosynthesis of the AK-, AF- and ACT-toxin common 9,10-epoxy-8-hydroxy-9-methyl-decatrienoic acid (EDA) structural moiety. The exact role of each enzyme, and of additional enzymes identified within the AF-toxin clusters have still to be determined. On the other hand, ACTTS1 to ACTTS4 are specific to the tangerine pathotype. The function of ACTTS3 is to elongate the polyketide chain portion of ACT-toxin that is unique to this toxin. The enoyl-reductase ACTTS2 might complement the missing enoyl-reductase (ER) domain in ACTTS3 in the synthesis of the polyketide portion of ACT-toxin. The roles of the nonribosomal peptide synthetases-related proteins ACTTS1 and ACTTS4 have also still not been elucidated. The sequence is that of Enoyl-CoA hydratase ACTT3 from Alternaria alternata (Alternaria rot fungus).